The chain runs to 447 residues: UPF0210 protein LAF_0976 (447 aa).

Belongs to the UPF0210 family. In terms of assembly, homodimer.

The protein is UPF0210 protein LAF_0976 of Limosilactobacillus fermentum (strain NBRC 3956 / LMG 18251) (Lactobacillus fermentum).